A 342-amino-acid chain; its full sequence is L-threonine 3-dehydrogenase (342 aa).

Zn(2+) is bound at residue Cys38. Active-site charge relay system residues include Thr40 and His43. Positions 63, 64, 93, 96, 99, and 107 each coordinate Zn(2+). NAD(+) is bound by residues Ile175, Asp195, Arg200, 262 to 264, and 286 to 287; these read LGI and IY.

The protein belongs to the zinc-containing alcohol dehydrogenase family. In terms of assembly, homotetramer. Zn(2+) serves as cofactor.

It is found in the cytoplasm. The enzyme catalyses L-threonine + NAD(+) = (2S)-2-amino-3-oxobutanoate + NADH + H(+). It participates in amino-acid degradation; L-threonine degradation via oxydo-reductase pathway; glycine from L-threonine: step 1/2. Functionally, catalyzes the NAD(+)-dependent oxidation of L-threonine to 2-amino-3-ketobutyrate. In Burkholderia cenocepacia (strain HI2424), this protein is L-threonine 3-dehydrogenase.